We begin with the raw amino-acid sequence, 216 residues long: RNA pyrophosphohydrolase (216 aa).

The 144-residue stretch at 6 to 149 folds into the Nudix hydrolase domain; that stretch reads GFRPNVGIIL…KRDVYQLALT (144 aa). A Nudix box motif is present at residues 38-59; sequence GGIKYGETPMQAMYRELHEETG.

Belongs to the Nudix hydrolase family. RppH subfamily. A divalent metal cation serves as cofactor.

In terms of biological role, accelerates the degradation of transcripts by removing pyrophosphate from the 5'-end of triphosphorylated RNA, leading to a more labile monophosphorylated state that can stimulate subsequent ribonuclease cleavage. The sequence is that of RNA pyrophosphohydrolase from Burkholderia ambifaria (strain MC40-6).